A 238-amino-acid polypeptide reads, in one-letter code: Triggering receptor expressed on myeloid cells 1 (238 aa).

The signal sequence occupies residues 1-20 (MRSARLGRLLWMLFITEIQA). The region spanning 21-129 (ATELPEEKYI…KDPIILFYPV (109 aa)) is the Ig-like V-type domain. Topologically, residues 21-210 (ATELPEEKYI…DITRDTEISL (190 aa)) are extracellular. Cys41 and Cys113 form a disulfide bridge. The N-linked (GlcNAc...) asparagine glycan is linked to Asn135. Residues 141-169 (PASAETPTQSCSPTTTLPPTTTTNRHRPR) form a disordered region. The segment covering 146-163 (TPTQSCSPTTTLPPTTTT) has biased composition (low complexity). N-linked (GlcNAc...) asparagine glycosylation occurs at Asn198. Residues 211-231 (ILPAVCGLLSKSLVFIVLFVV) traverse the membrane as a helical segment. Residues 232-238 (TRMSFTP) are Cytoplasmic-facing.

In terms of assembly, monomer. Homomultimer; when activated. Interacts with TYROBP/DAP12. Interacts with TLR4.

Its subcellular location is the cell membrane. In terms of biological role, cell surface receptor that plays important roles in innate and adaptive immunity by amplifying inflammatory responses. Upon activation by various ligands such as PGLYRP1, HMGB1 or HSP70, multimerizes and forms a complex with transmembrane adapter TYROBP/DAP12. In turn, initiates a SYK-mediated cascade of tyrosine phosphorylation, activating multiple downstream mediators such as BTK, MAPK1, MAPK3 or phospholipase C-gamma. This cascade promotes the neutrophil- and macrophage-mediated release of pro-inflammatory cytokines and/or chemokines, as well as their migration and thereby amplifies inflammatory responses that are triggered by bacterial and fungal infections. By also promoting the amplification of inflammatory signals that are initially triggered by Toll-like receptor (TLR) and NOD-like receptor engagement, plays a major role in the pathophysiology of acute and chronic inflammatory diseases of different etiologies including septic shock and atherosclerosis. The chain is Triggering receptor expressed on myeloid cells 1 (TREM1) from Sus scrofa (Pig).